Here is a 492-residue protein sequence, read N- to C-terminus: Trigger factor (492 aa).

The segment at 77–96 is disordered; the sequence is EILSSRGEKSATQPAISMTE. The region spanning 169 to 254 is the PPIase FKBP-type domain; the sequence is GDRVTMNYLG…VKEVAAAAAV (86 aa). The interval 439–492 is disordered; sequence ELLADDGEEETETKKKAPAKKKAAAKADDAAEGEEAAPKKKAPAKKKATEADAE.

The protein belongs to the FKBP-type PPIase family. Tig subfamily.

The protein localises to the cytoplasm. The catalysed reaction is [protein]-peptidylproline (omega=180) = [protein]-peptidylproline (omega=0). In terms of biological role, involved in protein export. Acts as a chaperone by maintaining the newly synthesized protein in an open conformation. Functions as a peptidyl-prolyl cis-trans isomerase. The polypeptide is Trigger factor (Agrobacterium fabrum (strain C58 / ATCC 33970) (Agrobacterium tumefaciens (strain C58))).